The chain runs to 252 residues: 5-oxoprolinase subunit A (252 aa).

Belongs to the LamB/PxpA family. Forms a complex composed of PxpA, PxpB and PxpC.

It catalyses the reaction 5-oxo-L-proline + ATP + 2 H2O = L-glutamate + ADP + phosphate + H(+). Functionally, catalyzes the cleavage of 5-oxoproline to form L-glutamate coupled to the hydrolysis of ATP to ADP and inorganic phosphate. The sequence is that of 5-oxoprolinase subunit A from Chloroflexus aggregans (strain MD-66 / DSM 9485).